We begin with the raw amino-acid sequence, 278 residues long: Tryptophan synthase alpha chain (278 aa).

Active-site proton acceptor residues include E49 and D60.

This sequence belongs to the TrpA family. Tetramer of two alpha and two beta chains.

The catalysed reaction is (1S,2R)-1-C-(indol-3-yl)glycerol 3-phosphate + L-serine = D-glyceraldehyde 3-phosphate + L-tryptophan + H2O. Its pathway is amino-acid biosynthesis; L-tryptophan biosynthesis; L-tryptophan from chorismate: step 5/5. Functionally, the alpha subunit is responsible for the aldol cleavage of indoleglycerol phosphate to indole and glyceraldehyde 3-phosphate. This Psychrobacter arcticus (strain DSM 17307 / VKM B-2377 / 273-4) protein is Tryptophan synthase alpha chain.